Consider the following 75-residue polypeptide: Small ribosomal subunit protein bS18 (75 aa).

The protein belongs to the bacterial ribosomal protein bS18 family. Part of the 30S ribosomal subunit. Forms a tight heterodimer with protein bS6.

Functionally, binds as a heterodimer with protein bS6 to the central domain of the 16S rRNA, where it helps stabilize the platform of the 30S subunit. This Acinetobacter baumannii (strain AB307-0294) protein is Small ribosomal subunit protein bS18.